Here is a 124-residue protein sequence, read N- to C-terminus: UPF0225 protein SCO1677 (124 aa).

It belongs to the UPF0225 family.

This Streptomyces coelicolor (strain ATCC BAA-471 / A3(2) / M145) protein is UPF0225 protein SCO1677.